Here is a 151-residue protein sequence, read N- to C-terminus: GTP-dependent dephospho-CoA kinase (151 aa).

Residues D30, V31, D49, K51, and E104 each coordinate GTP.

The protein belongs to the GTP-dependent DPCK family.

It carries out the reaction 3'-dephospho-CoA + GTP = GDP + CoA + H(+). It functions in the pathway cofactor biosynthesis; coenzyme A biosynthesis. Functionally, catalyzes the GTP-dependent phosphorylation of the 3'-hydroxyl group of dephosphocoenzyme A to form coenzyme A (CoA). The protein is GTP-dependent dephospho-CoA kinase of Cenarchaeum symbiosum (strain A).